Reading from the N-terminus, the 1001-residue chain is Ankyrin repeat domain-containing protein 35 (1001 aa).

ANK repeat units lie at residues 53–82, 86–115, 119–148, 152–181, 185–214, and 218–247; these read NGQS…DINS, DGST…NEDA, ENRS…FLDV, DGRT…RVNV, NDKS…DAGA, and TGHD…RRRR. 3 disordered regions span residues 256 to 296, 352 to 482, and 559 to 601; these read PDLA…PCSE, PRAS…VAEP, and PEVP…ALGG. The segment covering 281–295 has biased composition (acidic residues); the sequence is PEEEQEEKEDEDPCS. Residues 295-344 adopt a coiled-coil conformation; that stretch reads SEEWRWKYEEERRKVVRLEQELVQKTEECKTQAAAYLDLENQIREQAQEL. Basic and acidic residues predominate over residues 402-422; that stretch reads KKAEDSAPGKIQYEVHGRSQP. The segment covering 423-434 has biased composition (low complexity); the sequence is EEQGPPQSPASE. Over residues 440–450 the composition is skewed to polar residues; it reads TGQQLTTNGAQ. Positions 579 to 588 are enriched in basic and acidic residues; it reads KQDEEKEKRV. Coiled-coil stretches lie at residues 610–696, 733–810, and 851–968; these read KGQL…LLAS, ISTL…IGKL, and QELK…HEEI. Residues 879–902 form a disordered region; it reads RRSGDLAAQAAEQERQASEMRGRS. A compositionally biased stretch (basic and acidic residues) spans 890-902; the sequence is EQERQASEMRGRS.

The protein is Ankyrin repeat domain-containing protein 35 (ANKRD35) of Homo sapiens (Human).